A 393-amino-acid polypeptide reads, in one-letter code: Branched-chain-amino-acid aminotransferase, mitochondrial (393 aa).

The transit peptide at 1–27 directs the protein to the mitochondrion; sequence MSAAILGQVWTRKLLPIPWRLCVPGRC. Residue Tyr-169 coordinates substrate. At Lys-230 the chain carries N6-(pyridoxal phosphate)lysine. Residue Lys-322 is modified to N6-acetyllysine.

This sequence belongs to the class-IV pyridoxal-phosphate-dependent aminotransferase family. As to quaternary structure, homodimer. It depends on pyridoxal 5'-phosphate as a cofactor. In terms of tissue distribution, expressed in all tissues.

The protein localises to the mitochondrion. It catalyses the reaction L-leucine + 2-oxoglutarate = 4-methyl-2-oxopentanoate + L-glutamate. The enzyme catalyses L-isoleucine + 2-oxoglutarate = (S)-3-methyl-2-oxopentanoate + L-glutamate. It carries out the reaction L-valine + 2-oxoglutarate = 3-methyl-2-oxobutanoate + L-glutamate. Catalyzes the first reaction in the catabolism of the essential branched chain amino acids leucine, isoleucine, and valine. May also function as a transporter of branched chain alpha-keto acids. The sequence is that of Branched-chain-amino-acid aminotransferase, mitochondrial (Bcat2) from Rattus norvegicus (Rat).